Here is a 178-residue protein sequence, read N- to C-terminus: Dual-action ribosomal maturation protein DarP (178 aa).

Belongs to the DarP family.

It is found in the cytoplasm. In terms of biological role, member of a network of 50S ribosomal subunit biogenesis factors which assembles along the 30S-50S interface, preventing incorrect 23S rRNA structures from forming. Promotes peptidyl transferase center (PTC) maturation. The polypeptide is Dual-action ribosomal maturation protein DarP (Mannheimia succiniciproducens (strain KCTC 0769BP / MBEL55E)).